We begin with the raw amino-acid sequence, 143 residues long: Antitumor antibiotic C-1027 apoprotein (143 aa).

The N-terminal stretch at 1-33 (MSLRHMSRRASRFGVVAVASIGLAAAAQSVAFA) is a signal peptide. Intrachain disulfides connect Cys69-Cys78 and Cys119-Cys124.

The protein belongs to the neocarzinostatin family.

Functionally, binds non-covalently to a chromophore which is the cytotoxic and mutagenic component of the antibiotic. The chromophore binds to DNA as a weak intercalator and causes single- and double-strand breaks. The chain is Antitumor antibiotic C-1027 apoprotein (cagA) from Streptomyces globisporus.